Here is a 67-residue protein sequence, read N- to C-terminus: ATP synthase F(0) complex subunit 8 (67 aa).

A helical membrane pass occupies residues 8–24 (PWFITILSMIITLFILF). Lysine 54 carries the post-translational modification N6-acetyllysine; alternate. Residue lysine 54 is modified to N6-succinyllysine; alternate. N6-acetyllysine is present on lysine 57.

The protein belongs to the ATPase protein 8 family. Component of the ATP synthase complex composed at least of ATP5F1A/subunit alpha, ATP5F1B/subunit beta, ATP5MC1/subunit c (homooctomer), MT-ATP6/subunit a, MT-ATP8/subunit 8, ATP5ME/subunit e, ATP5MF/subunit f, ATP5MG/subunit g, ATP5MK/subunit k, ATP5MJ/subunit j, ATP5F1C/subunit gamma, ATP5F1D/subunit delta, ATP5F1E/subunit epsilon, ATP5PF/subunit F6, ATP5PB/subunit b, ATP5PD/subunit d, ATP5PO/subunit OSCP. ATP synthase complex consists of a soluble F(1) head domain (subunits alpha(3) and beta(3)) - the catalytic core - and a membrane F(0) domain - the membrane proton channel (subunits c, a, 8, e, f, g, k and j). These two domains are linked by a central stalk (subunits gamma, delta, and epsilon) rotating inside the F1 region and a stationary peripheral stalk (subunits F6, b, d, and OSCP). Interacts with PRICKLE3.

Its subcellular location is the mitochondrion membrane. Subunit 8, of the mitochondrial membrane ATP synthase complex (F(1)F(0) ATP synthase or Complex V) that produces ATP from ADP in the presence of a proton gradient across the membrane which is generated by electron transport complexes of the respiratory chain. ATP synthase complex consist of a soluble F(1) head domain - the catalytic core - and a membrane F(1) domain - the membrane proton channel. These two domains are linked by a central stalk rotating inside the F(1) region and a stationary peripheral stalk. During catalysis, ATP synthesis in the catalytic domain of F(1) is coupled via a rotary mechanism of the central stalk subunits to proton translocation. In vivo, can only synthesize ATP although its ATP hydrolase activity can be activated artificially in vitro. Part of the complex F(0) domain. This Orycteropus afer (Aardvark) protein is ATP synthase F(0) complex subunit 8.